A 1496-amino-acid chain; its full sequence is DNA-directed RNA polymerase subunit beta' (1496 aa).

Residues Cys-70, Cys-72, Cys-85, and Cys-88 each contribute to the Zn(2+) site. 3 residues coordinate Mg(2+): Asp-461, Asp-463, and Asp-465. Residues Cys-908, Cys-982, Cys-989, and Cys-992 each coordinate Zn(2+). The segment at 1467–1496 (DKDMQVEGESEVPAIPPVAEGSAPEAPPAE) is disordered.

Belongs to the RNA polymerase beta' chain family. As to quaternary structure, the RNAP catalytic core consists of 2 alpha, 1 beta, 1 beta' and 1 omega subunit. When a sigma factor is associated with the core the holoenzyme is formed, which can initiate transcription. Mg(2+) serves as cofactor. Requires Zn(2+) as cofactor.

It carries out the reaction RNA(n) + a ribonucleoside 5'-triphosphate = RNA(n+1) + diphosphate. Functionally, DNA-dependent RNA polymerase catalyzes the transcription of DNA into RNA using the four ribonucleoside triphosphates as substrates. This is DNA-directed RNA polymerase subunit beta' from Paramagnetospirillum magneticum (strain ATCC 700264 / AMB-1) (Magnetospirillum magneticum).